The primary structure comprises 211 residues: Arginine exporter protein ArgO (211 aa).

Transmembrane regions (helical) follow at residues 1–21 (MFTYYFQGLALGAAMILPLGP), 37–57 (LMIALLCAVSDLLLICAGIFG), 68–88 (LLAIVTWGGVAFLLWYGFGAL), 111–131 (IIITMLAVTWLNPHVYLDTFV), 147–167 (WFALGTISASFLWFFGLALLA), and 182–202 (IINIVVGAVMWFIAFQLAKEG).

Belongs to the LysE/ArgO transporter (TC 2.A.75) family.

It is found in the cell inner membrane. The catalysed reaction is L-arginine(in) = L-arginine(out). Involved in the export of arginine. Important to control the intracellular level of arginine and the correct balance between arginine and lysine. This Klebsiella pneumoniae (strain 342) protein is Arginine exporter protein ArgO.